Reading from the N-terminus, the 314-residue chain is DNA-directed RNA polymerase subunit alpha (314 aa).

Positions M1–T228 are alpha N-terminal domain (alpha-NTD). The tract at residues E246–D314 is alpha C-terminal domain (alpha-CTD).

The protein belongs to the RNA polymerase alpha chain family. In terms of assembly, homodimer. The RNAP catalytic core consists of 2 alpha, 1 beta, 1 beta' and 1 omega subunit. When a sigma factor is associated with the core the holoenzyme is formed, which can initiate transcription.

It carries out the reaction RNA(n) + a ribonucleoside 5'-triphosphate = RNA(n+1) + diphosphate. In terms of biological role, DNA-dependent RNA polymerase catalyzes the transcription of DNA into RNA using the four ribonucleoside triphosphates as substrates. The polypeptide is DNA-directed RNA polymerase subunit alpha (Bacillus velezensis (strain DSM 23117 / BGSC 10A6 / LMG 26770 / FZB42) (Bacillus amyloliquefaciens subsp. plantarum)).